Here is a 160-residue protein sequence, read N- to C-terminus: SsrA-binding protein (160 aa).

The protein belongs to the SmpB family.

It is found in the cytoplasm. Required for rescue of stalled ribosomes mediated by trans-translation. Binds to transfer-messenger RNA (tmRNA), required for stable association of tmRNA with ribosomes. tmRNA and SmpB together mimic tRNA shape, replacing the anticodon stem-loop with SmpB. tmRNA is encoded by the ssrA gene; the 2 termini fold to resemble tRNA(Ala) and it encodes a 'tag peptide', a short internal open reading frame. During trans-translation Ala-aminoacylated tmRNA acts like a tRNA, entering the A-site of stalled ribosomes, displacing the stalled mRNA. The ribosome then switches to translate the ORF on the tmRNA; the nascent peptide is terminated with the 'tag peptide' encoded by the tmRNA and targeted for degradation. The ribosome is freed to recommence translation, which seems to be the essential function of trans-translation. This Photorhabdus laumondii subsp. laumondii (strain DSM 15139 / CIP 105565 / TT01) (Photorhabdus luminescens subsp. laumondii) protein is SsrA-binding protein.